We begin with the raw amino-acid sequence, 546 residues long: Chaperonin GroEL (546 aa).

ATP contacts are provided by residues 30 to 33 (TLGP), Lys51, 87 to 91 (DGTTT), Gly415, 479 to 481 (NAA), and Asp495.

Belongs to the chaperonin (HSP60) family. As to quaternary structure, forms a cylinder of 14 subunits composed of two heptameric rings stacked back-to-back. Interacts with the co-chaperonin GroES.

Its subcellular location is the cytoplasm. It catalyses the reaction ATP + H2O + a folded polypeptide = ADP + phosphate + an unfolded polypeptide.. Functionally, together with its co-chaperonin GroES, plays an essential role in assisting protein folding. The GroEL-GroES system forms a nano-cage that allows encapsulation of the non-native substrate proteins and provides a physical environment optimized to promote and accelerate protein folding. The chain is Chaperonin GroEL from Allochromatium vinosum (Chromatium vinosum).